The chain runs to 1881 residues: MVGRGASLCAVQPAVAECGPARETPPLEVSPRKRLPAGLDQDPCSSRPAPEGAGASAEQSHSAGGGGWCRHCHTKLVELKRQAWKLVSGPGTPLRDPCLSTLLLDKLPASGVQPACRPDTESRCDVCTTHLHQLTREALRLLQTPASHEDPNASRGGLAAPSSRDPPGPVGLMGRQPPVGPDRRKATAWPPGPSVQVSVAPAGLGGALSTVTIQAQQCLEGVWSLSRVNSFLPPTCLAEAAVAAVAVADTVRDCAPAAGPERMSKAWGRGAACTTALVTPAPGTSAGGSTGPSAAASFFIRAAQKLSLASKRKKHHPPPAPSTRGTSTYPTDFSGSLQLWPPPVPPCLLRAASKAKENPSSFGKVKVMLRIWPAQGVQRSAESTSFLKVDSRKKQVTLYDPAAGPPGCAGLRHAPTAPVPKMFAFDAIFPQDSEQAEVCSGTVADVLQSVVSGADGCIFSFGHMSLGKSYTMIGKDSSPQSLGIVPCAISWLFRLIDERKERLGTRFSIRVSAVEVCGHDQSLRDLLAEVASGSLQDTQSPGVYLREDPVCGTQLQNQNELRAPTAEKAAFYLDAALAARSTSRAGCGEEARRSSHMLFTLHVYQYRVEKCGQGGMSGGRSRLHLIDLGSCDAAVGRGGEASGGPLCLSLSALGSVILALVNGAKHVPYRDHRLTMLLRESLATTNCRTTMIAHISDSPAHHAETLSTVQLAARIHRLRRKKGKHASSSSGGESSCEEGRARRPPHLRPFHPRAVVLDPDRSAPGLSGDPDYSSSSEQSCDTVIYVGPGGMALSDRELTDNEGPPDFVPIIPALSRRRPSEGPRDADHFRCSTFAELQERLECIDGSEAFPGPQGGSDGAQASPARGGRKPSLPEATPSRKAVAPTVVTSCPRGSPGHDTHRSASDPSKTGTQSEQRVDGSRPEPPASDKTSGGGGRRPLPSPAPPPPRQPEAQGIPKEPGGEGTDSVLRTPPVGMSGQAALPPLLSDSAYLSPSARGRHLERGLLTTTVTLQQPVELNGEDELVFTVVEELPLGGLAGATRPSSLASMSSDCSLQALASGSRPVSIISSINDEFDAYTSQMSEGPGDPGEFPEGTAWAGGSPASSIGSWLSDVGVCLSESRGPTPQPPFSPNSAAGPGPPEFPTPGSSLEESKVRSSECGRPDNPGSARSLHPGEAVATTQTQPGREPWARSPHEVASAQTIHSSLPRKPRTTSTASRARPSRGPYSPGGLFEDPWLLRAEDCDTRQIASTGRAPSPTPGSPRLPETQMMLACAQRVVDGCEVASRMSRRPEAVARIPPLRRGATTLGVTTPAASCGDAPAEAVVHSGSLKTTSGSKKSVSPKGAFFPRPSGAGPPAPPVRKSSLEQSTALTPTQALGLTRAGAPSAFRGEEEARPSGRSDSSVPKATSSLKARAGKMDVPYRPSGHMSLERCEGLAHGSSKVRDVVGRPPRAVPRLGVPSASPPLGPAPACRNSPAKGVGATKPPAGGAKGRNLGPSTSRALGAPVKPLGPVAGKTAGGAVPGPRAAPRAVPGIGAKAGRGTIMGTKQAFRAAHSRVHELAASGSPSRGGLSWGSTDSDSGNDSGVNLAEERQPSSPALPSPYSKVTAPRRPQRYSSGHGSDNSSVLSGELPPAMGRTALFYHSGGSSGYESMIRDSEATGSASSAPDSMSESGTASLGARSRSLKSPKKRATGLQRRRLIPAPLPDAAALGRKPSLPGQWVDLPPPLAGSLKEPFEIKVYEIDDVERLQRHRLPLRENEAKPSQDAEKGPVCISSKLRLAERRQQRLQEVQAKRDHLCEELAETQGRLMVEPGRWLEQFEVDPELEPESAEYLVALEQATAALEQCVNLCKAHVMMVTCFDIGVAATTAVPGPQEVDV.

Disordered stretches follow at residues 20–66, 145–193, and 309–330; these read PARE…AGGG, PASH…PPGP, and ASKR…STYP. Ser-30 is modified (phosphoserine). The Kinesin motor domain occupies 364-718; sequence KVKVMLRIWP…VQLAARIHRL (355 aa). Residue 462–469 participates in ATP binding; it reads GHMSLGKS. Disordered regions lie at residues 718–778, 794–827, 846–982, 1078–1104, 1118–1266, 1328–1425, 1442–1633, and 1652–1698; these read LRRK…SSEQ, SDRE…RDAD, GSEA…QAAL, YTSQ…GSPA, LSES…PRLP, SGSL…PYRP, SKVR…SGEL, and YESM…TGLQ. A compositionally biased stretch (basic residues) spans 742-751; that stretch reads RRPPHLRPFH. Basic and acidic residues predominate over residues 818–827; that stretch reads RPSEGPRDAD. Polar residues predominate over residues 905 to 915; the sequence is SDPSKTGTQSE. The segment covering 940–950 has biased composition (pro residues); that stretch reads LPSPAPPPPRQ. Positions 1084–1095 are enriched in low complexity; sequence EGPGDPGEFPEG. Residues 1151–1162 show a composition bias toward basic and acidic residues; that stretch reads EESKVRSSECGR. Ser-1257 is modified (phosphoserine). Positions 1328-1353 are enriched in low complexity; that stretch reads SGSLKTTSGSKKSVSPKGAFFPRPSG. Over residues 1366–1378 the composition is skewed to polar residues; it reads LEQSTALTPTQAL. Over residues 1390–1399 the composition is skewed to basic and acidic residues; it reads RGEEEARPSG. The span at 1400–1412 shows a compositional bias: polar residues; the sequence is RSDSSVPKATSSL. Low complexity-rich tracts occupy residues 1477–1489, 1524–1537, and 1575–1587; these read PAKG…PPAG, PGPR…PGIG, and WGST…NDSG. Positions 1616–1629 are enriched in polar residues; it reads RYSSGHGSDNSSVL. A Phosphoserine modification is found at Ser-1654. Residues 1664–1675 show a composition bias toward low complexity; it reads SASSAPDSMSES. Residues 1685–1698 show a composition bias toward basic residues; sequence RSLKSPKKRATGLQ. Positions 1780-1812 form a coiled coil; sequence LRLAERRQQRLQEVQAKRDHLCEELAETQGRLM.

It belongs to the TRAFAC class myosin-kinesin ATPase superfamily. Kinesin family. KIF26 subfamily. As to quaternary structure, interacts with GRB2 (via SH2 domain). In terms of tissue distribution, expressed in several neuronal populations.

The protein resides in the cytoplasm. It localises to the cytoskeleton. Functionally, atypical kinesin that plays a key role in enteric neuron development. Acts by repressing a cell growth signaling pathway in the enteric nervous system development, possibly via its interaction with GRB2 that prevents GRB2-binding to SHC, thereby attenating the GDNF-Ret signaling. Binds to microtubules but lacks microtubule-based motility due to the absence of ATPase activity. Plays a critical role in cerebral cortical development. It probably acts as a microtubule stabilizer that regulates neurite growth and radial migration of cortical excitatory neurons. The protein is Kinesin-like protein KIF26A (Kif26a) of Mus musculus (Mouse).